The primary structure comprises 872 residues: Alanine--tRNA ligase (872 aa).

Zn(2+)-binding residues include His567, His571, Cys669, and His673.

It belongs to the class-II aminoacyl-tRNA synthetase family. Zn(2+) serves as cofactor.

The protein resides in the cytoplasm. The enzyme catalyses tRNA(Ala) + L-alanine + ATP = L-alanyl-tRNA(Ala) + AMP + diphosphate. In terms of biological role, catalyzes the attachment of alanine to tRNA(Ala) in a two-step reaction: alanine is first activated by ATP to form Ala-AMP and then transferred to the acceptor end of tRNA(Ala). Also edits incorrectly charged Ser-tRNA(Ala) and Gly-tRNA(Ala) via its editing domain. In Streptococcus pyogenes serotype M5 (strain Manfredo), this protein is Alanine--tRNA ligase.